Here is a 350-residue protein sequence, read N- to C-terminus: uncharacterized protein (350 aa).

One can recognise an Integrase catalytic domain in the interval 164-327; it reads NDPLPGYVEV…EKTRIGARVV (164 aa).

This is an uncharacterized protein from Sinorhizobium fredii (strain NBRC 101917 / NGR234).